The following is a 155-amino-acid chain: MAEELVKPYNGDPFVGHLSTPISDSGLVKTFIGNLPAYRQGLSPILRGLEVGMAHGYFLIGPWVKLGPLRDSDVANLGGLISGIALILVATACLAAYGLVSFQKGGSSSDPLKTSEGWSQFTAGFFVGAMGSAFVAFFLLENFSVVDGIMTGLFN.

2 helical membrane-spanning segments follow: residues 80–102 (LISG…LVSF) and 117–139 (GWSQ…AFFL).

This sequence belongs to the PsaL family.

It is found in the cellular thylakoid membrane. In Thermosynechococcus vestitus (strain NIES-2133 / IAM M-273 / BP-1), this protein is Photosystem I reaction center subunit XI.